Consider the following 141-residue polypeptide: Galactose-6-phosphate isomerase subunit LacA (141 aa).

Belongs to the LacAB/RpiB family. In terms of assembly, heteromultimeric protein consisting of LacA and LacB.

It catalyses the reaction aldehydo-D-galactose 6-phosphate = keto-D-tagatose 6-phosphate. Its pathway is carbohydrate metabolism; D-galactose 6-phosphate degradation; D-tagatose 6-phosphate from D-galactose 6-phosphate: step 1/1. The polypeptide is Galactose-6-phosphate isomerase subunit LacA (Streptococcus pneumoniae serotype 4 (strain ATCC BAA-334 / TIGR4)).